The primary structure comprises 85 residues: Small ribosomal subunit protein uS12m (85 aa).

It belongs to the universal ribosomal protein uS12 family.

Its subcellular location is the mitochondrion matrix. It localises to the kinetoplast. Functionally, protein S12 is involved in the translation initiation step. This chain is Small ribosomal subunit protein uS12m (RPS12), found in Leishmania tarentolae (Sauroleishmania tarentolae).